The chain runs to 221 residues: 7-cyano-7-deazaguanine synthase (221 aa).

An ATP-binding site is contributed by 7 to 17 (LSGGMDSTTLL). Zn(2+) contacts are provided by Cys183, Cys191, Cys194, and Cys197.

The protein belongs to the QueC family. As to quaternary structure, homodimer. The cofactor is Zn(2+).

It carries out the reaction 7-carboxy-7-deazaguanine + NH4(+) + ATP = 7-cyano-7-deazaguanine + ADP + phosphate + H2O + H(+). The protein operates within purine metabolism; 7-cyano-7-deazaguanine biosynthesis. In terms of biological role, catalyzes the ATP-dependent conversion of 7-carboxy-7-deazaguanine (CDG) to 7-cyano-7-deazaguanine (preQ(0)). The polypeptide is 7-cyano-7-deazaguanine synthase (Caldicellulosiruptor bescii (strain ATCC BAA-1888 / DSM 6725 / KCTC 15123 / Z-1320) (Anaerocellum thermophilum)).